Here is a 143-residue protein sequence, read N- to C-terminus: MTKAIPKIGSRKKVRIGLRRNARFSLRKSARRITKGVIHVQASFNNTIITVTDPQGRVVFWSSAGTCGFKSSRKASPYAGQRTAVDAIRTVGLQRAEVMVKGAGSGRDAALRAIAKSGVRLSCIRDVTPMPHNGCRPPKKRRL.

It belongs to the universal ribosomal protein uS11 family. In terms of assembly, part of the 30S ribosomal subunit.

Its subcellular location is the plastid. The protein localises to the chloroplast. This chain is Small ribosomal subunit protein uS11c, found in Saccharum officinarum (Sugarcane).